The chain runs to 124 residues: Probable glycine cleavage system H protein (124 aa).

In terms of domain architecture, Lipoyl-binding spans 25–106; sequence TATIGITDYA…PYGSWLVKMA (82 aa). The residue at position 66 (Lys66) is an N6-lipoyllysine.

This sequence belongs to the GcvH family. The glycine cleavage system is composed of four proteins: P, T, L and H. Requires (R)-lipoate as cofactor.

Functionally, the glycine cleavage system catalyzes the degradation of glycine. The H protein shuttles the methylamine group of glycine from the P protein to the T protein. This Thermoplasma acidophilum (strain ATCC 25905 / DSM 1728 / JCM 9062 / NBRC 15155 / AMRC-C165) protein is Probable glycine cleavage system H protein.